A 221-amino-acid chain; its full sequence is Glutathione S-transferase alpha-3 (221 aa).

Residues 3–83 (GKPVLHYFDG…YIATKYNLYG (81 aa)) form the GST N-terminal domain. K4 carries the N6-succinyllysine modification. Residues Y9, R45, 54–55 (QV), and 67–68 (QT) contribute to the glutathione site. Positions 85–207 (DMKERALIDM…LQPGSQRKPL (123 aa)) constitute a GST C-terminal domain.

This sequence belongs to the GST superfamily. Alpha family. In terms of assembly, heterodimer of YC1 and YC2.

Its subcellular location is the cytoplasm. It catalyses the reaction RX + glutathione = an S-substituted glutathione + a halide anion + H(+). The enzyme catalyses androst-5-ene-3,17-dione = androst-4-ene-3,17-dione. It carries out the reaction pregn-5-ene-3,20-dione = progesterone. Conjugation of reduced glutathione to a wide number of exogenous and endogenous hydrophobic electrophiles. Catalyzes isomerization reactions that contribute to the biosynthesis of steroid hormones. Efficiently catalyze obligatory double-bond isomerizations of delta(5)-androstene-3,17-dione and delta(5)-pregnene-3,20-dione, precursors to testosterone and progesterone, respectively. Has substantial activity toward aflatoxin B1-8,9-epoxide. The chain is Glutathione S-transferase alpha-3 from Rattus norvegicus (Rat).